We begin with the raw amino-acid sequence, 512 residues long: Mannose-1-phosphate guanylyltransferase (512 aa).

Belongs to the mannose-6-phosphate isomerase type 2 family.

The enzyme catalyses alpha-D-mannose 1-phosphate + GTP + H(+) = GDP-alpha-D-mannose + diphosphate. The sequence is that of Mannose-1-phosphate guanylyltransferase (noeJ) from Sinorhizobium fredii (strain NBRC 101917 / NGR234).